We begin with the raw amino-acid sequence, 389 residues long: Mitochondrial carrier homolog 1 (389 aa).

Residues 1-78 are disordered; it reads MGASDPEVAP…PGAPGSGDNA (78 aa). Residues 1–93 are Mitochondrial intermembrane-facing; sequence MGASDPEVAP…LFVALGAGVT (93 aa). Over residues 15 to 33 the composition is skewed to gly residues; it reads GAAGMAGAGAGAGARGGAP. Residue Arg29 is modified to Omega-N-methylarginine. 2 Solcar repeats span residues 81–176 and 192–280; these read TEAL…FPPD and KKVV…INAY. The chain crosses the membrane as a helical span at residues 94–104; the sequence is ALSHPLLYVKL. The Cytoplasmic portion of the chain corresponds to 105–155; sequence LIQVGHEPMPPTLGTNVLGRKVLYLPSFFTYAKYIVQVDGKIGLFRGLSPR. A helical membrane pass occupies residues 156-176; it reads LMSNALSTVTRGSMKKVFPPD. Residues 177–209 lie on the Mitochondrial intermembrane side of the membrane; that stretch reads EMEQVSNKDDMKTSLKKVVKETSYEMMMQCVSR. A helical membrane pass occupies residues 210–229; sequence MLAHPLHVISMRCMVQFVGR. Residues 230 to 254 are Cytoplasmic-facing; it reads EAKYSGVLSSIGKIFKEEGLLGFFV. A helical transmembrane segment spans residues 255–279; it reads GLIPHLLGDVVFLWGCNLLAHFINA. The Mitochondrial intermembrane portion of the chain corresponds to 280–322; it reads YLVDDSVSDTPGGLGNDQNPGSQFSQALAIRSYTKFVMGIAVS. Residues 323-342 form a helical membrane-spanning segment; sequence MLTYPFLLVGDLMAVNNCGL. Over 343–371 the chain is Cytoplasmic; that stretch reads RAGLPPYSPVFKSWIHCWKYLSVQGQLFR. A helical transmembrane segment spans residues 372–389; sequence GSSLLFRRVSSGSCFALE.

It belongs to the mitochondrial carrier (TC 2.A.29) family. In terms of assembly, interacts with PSEN1.

Its subcellular location is the mitochondrion outer membrane. Protein insertase that mediates insertion of transmembrane proteins into the mitochondrial outer membrane. Catalyzes insertion of proteins with alpha-helical transmembrane regions, such as signal-anchored, tail-anchored and multi-pass membrane proteins. Does not mediate insertion of beta-barrel transmembrane proteins. May play a role in apoptosis. This is Mitochondrial carrier homolog 1 (Mtch1) from Mus musculus (Mouse).